The sequence spans 190 residues: Protein PLANT CADMIUM RESISTANCE 10 (190 aa).

Transmembrane regions (helical) follow at residues 78–98 (LLGS…WALV) and 108–125 (GALL…ACGY).

The protein belongs to the cornifelin family.

The protein localises to the membrane. Its function is as follows. May be involved in cadmium resistance. In Arabidopsis thaliana (Mouse-ear cress), this protein is Protein PLANT CADMIUM RESISTANCE 10 (PCR10).